Reading from the N-terminus, the 26-residue chain is Thrombopoietin (26 aa).

The protein belongs to the EPO/TPO family.

The protein resides in the secreted. Functionally, lineage-specific cytokine affecting the proliferation and maturation of megakaryocytes from their committed progenitor cells. It acts at a late stage of megakaryocyte development. It may be the major physiological regulator of circulating platelets. The protein is Thrombopoietin (THPO) of Sus scrofa (Pig).